The sequence spans 498 residues: Thiamine transporter 1 (498 aa).

The residue at position 1 (M1) is an N-acetylmethionine. Over 1-28 (MDVPARVSRRAAAAAARMLLRTARVPRE) the chain is Cytoplasmic. Residues 29 to 46 (CWFLPTALLCAYGFFANL) traverse the membrane as a helical segment. The Extracellular segment spans residues 47–71 (RPSEPFLTPYLLGPDKNLTERQVYN). The N-linked (GlcNAc...) asparagine glycan is linked to N63. Residues 72–92 (EIYPVWTYSYLLLLFPVFLAT) traverse the membrane as a helical segment. Residues 93–105 (DYLRYKPVILLQG) lie on the Cytoplasmic side of the membrane. The chain crosses the membrane as a helical span at residues 106–126 (LSLIVTWFMLLYAQGLLAIQF). Residues 127 to 128 (LE) are Extracellular-facing. The helical transmembrane segment at 129 to 149 (FFYGIATATEIAYYSYIYTVV) threads the bilayer. At 150–164 (DLGMYQKVTSYCRSA) the chain is on the cytoplasmic side. A helical membrane pass occupies residues 165 to 185 (TLVGFTVGSVLGQILVSVVGW). S186 is a topological domain (extracellular). A helical transmembrane segment spans residues 187–207 (LFSLNVISLTCVSVAFAVAWF). At 208-295 (LPMPQKSLFF…DFLMCYSSRP (88 aa)) the chain is on the cytoplasmic side. At S222 the chain carries Phosphoserine. The chain crosses the membrane as a helical span at residues 296-316 (LLCWSVWWALSTCGYFQVVNY). The Extracellular segment spans residues 317–334 (AQGLWEKVMPSQNADIYN). The helical transmembrane segment at 335–355 (GGVEAVSTLLGASAVFAVGYI) threads the bilayer. At 356-360 (KLSWS) the chain is on the cytoplasmic side. A helical transmembrane segment spans residues 361-381 (TWGEMTLFLCSLLIAAAVYVM). The Extracellular segment spans residues 382-386 (DTVQS). The chain crosses the membrane as a helical span at residues 387–407 (IWVCYASYVVFRIIYMVLITI). The Cytoplasmic segment spans residues 408-423 (ATFQIAANLSMERYAL). A helical transmembrane segment spans residues 424–444 (VFGVNTFIALALQTLLTLIVV). Over 445–456 (DARGLGLCITTQ) the chain is Extracellular. A helical transmembrane segment spans residues 457-477 (FLIYASYFAAISVVFLANGIV). The Cytoplasmic segment spans residues 478 to 498 (SIIKKCRKQEDPSSSPQASTS).

This sequence belongs to the reduced folate carrier (RFC) transporter (TC 2.A.48) family. Interacts with TSPAN1; this interaction increases the stability of SLC19A2. Interacts with TMEM63B. Expressed in liver. Expressed in cochlear hair cells and duodenum (at protein level). Detected in pancreatic acinar cells (at protein level). Also expressed strongly in pancreatic islet cells. Expressed in the testis. In terms of tissue distribution, very highly expressed in liver, and also detected at lower levels in heart, testis, kidney, brain and spleen. As to expression, expressed at low levels in liver and spleen.

The protein resides in the cell membrane. The catalysed reaction is thiamine(out) + H(+)(in) = thiamine(in) + H(+)(out). The enzyme catalyses pyridoxine(out) + n H(+)(out) = pyridoxine(in) + n H(+)(in). Functionally, high-affinity transporter for the intake of thiamine. Essential for spermatogenesis. Mediates H(+)-dependent pyridoxine transport. This Mus musculus (Mouse) protein is Thiamine transporter 1.